A 123-amino-acid chain; its full sequence is Secreted RxLR effector protein RXLR-C21 (123 aa).

The signal sequence occupies residues 1–23 (MRLHLLVLSVIVVSLLVSDNAHA). The RxLR-dEER signature appears at 32-65 (RALRETPINGLVTNQLAVSRNLTPAKFITNSEER). Residues 101-121 (VTTICSIVLFVMVFGCLYKIF) form a helical membrane-spanning segment.

It belongs to the RxLR effector family.

The protein localises to the secreted. Its subcellular location is the host endoplasmic reticulum membrane. In terms of biological role, secreted effector that does not suppress pattern-triggered immunity (PTI) in plant host. The protein is Secreted RxLR effector protein RXLR-C21 of Plasmopara halstedii (Downy mildew of sunflower).